The sequence spans 364 residues: Putative agmatine deiminase (364 aa).

Catalysis depends on Cys-355, which acts as the Amidino-cysteine intermediate.

This sequence belongs to the agmatine deiminase family.

It catalyses the reaction agmatine + H2O = N-carbamoylputrescine + NH4(+). This Mycoplasma mycoides subsp. mycoides SC (strain CCUG 32753 / NCTC 10114 / PG1) protein is Putative agmatine deiminase.